Consider the following 564-residue polypeptide: 5-aminolevulinate synthase, mitochondrial (564 aa).

A mitochondrion-targeting transit peptide spans Met1 to Tyr57. Residues Arg113, Ser226, and Lys245 each coordinate substrate. Positions 278, 306, and 350 each coordinate pyridoxal 5'-phosphate. The active site involves Lys353. N6-(pyridoxal phosphate)lysine is present on Lys353. Residues Thr382 and Thr383 each coordinate pyridoxal 5'-phosphate. Substrate is bound at residue Thr468.

The protein belongs to the class-II pyridoxal-phosphate-dependent aminotransferase family. As to quaternary structure, homodimer. Requires pyridoxal 5'-phosphate as cofactor.

Its subcellular location is the mitochondrion matrix. The enzyme catalyses succinyl-CoA + glycine + H(+) = 5-aminolevulinate + CO2 + CoA. Its pathway is porphyrin-containing compound metabolism; protoporphyrin-IX biosynthesis; 5-aminolevulinate from glycine: step 1/1. In terms of biological role, catalyzes the synthesis of 5-aminolevulinate (ALA) from succinyl-CoA and glycine, the first and rate-limiting step in heme biosynthesis. The sequence is that of 5-aminolevulinate synthase, mitochondrial (HEM1) from Candida albicans (strain SC5314 / ATCC MYA-2876) (Yeast).